The primary structure comprises 262 residues: Intercellular adhesion molecule 4 (262 aa).

An N-terminal signal peptide occupies residues 1–22; that stretch reads MESALLLPSLLLVAAYPRGGSP. Over 23-231 the chain is Extracellular; it reads QQEWMQSPPA…LTVLALSPAS (209 aa). Ig-like C2-type domains are found at residues 54–116 and 138–209; these read GGSA…TREA and GHKY…LNLD. N-linked (GlcNAc...) asparagine glycans are attached at residues Asn60, Asn84, and Asn182. 4 cysteine pairs are disulfide-bonded: Cys61-Cys105, Cys61-Cys109, Cys65-Cys109, and Cys145-Cys202. The chain crosses the membrane as a helical span at residues 232–252; sequence IALASTSIATLVGILLAVGAV. The Cytoplasmic portion of the chain corresponds to 253–262; it reads YVRKYLAVQT.

The protein belongs to the immunoglobulin superfamily. ICAM family.

Its subcellular location is the cell membrane. It localises to the secreted. Adhesion molecule that binds to leukocyte adhesion LFA-1 protein LFA-1 (integrin alpha-L/beta-2). ICAM4 is also a ligand for alpha-4/beta-1 and alpha-V integrins. Isoform 2 may modulate binding of membrane-associated ICAM4. This Mus musculus (Mouse) protein is Intercellular adhesion molecule 4 (Icam4).